The chain runs to 871 residues: Translation initiation factor IF-2 (871 aa).

Disordered stretches follow at residues 60–101 and 184–203; these read KKNI…QEVK and ESLK…KKES. Over residues 61–72 the composition is skewed to basic residues; that stretch reads KNIKTPTAKKPK. A compositionally biased stretch (basic and acidic residues) spans 73 to 101; the sequence is KENIKEQEKLNESEKKEPKKEEKLKQEVK. In terms of domain architecture, tr-type G spans 370-537; it reads TRAPVITIMG…IVLLQADILE (168 aa). The G1 stretch occupies residues 379–386; the sequence is GHVDHGKT. Position 379–386 (379–386) interacts with GTP; the sequence is GHVDHGKT. The tract at residues 404–408 is G2; the sequence is GITQH. Residues 425–428 form a G3 region; that stretch reads DTPG. GTP is bound by residues 425-429 and 479-482; these read DTPGH and NKMD. A G4 region spans residues 479–482; the sequence is NKMD. Residues 515–517 form a G5 region; that stretch reads SAK.

It belongs to the TRAFAC class translation factor GTPase superfamily. Classic translation factor GTPase family. IF-2 subfamily.

It localises to the cytoplasm. One of the essential components for the initiation of protein synthesis. Protects formylmethionyl-tRNA from spontaneous hydrolysis and promotes its binding to the 30S ribosomal subunits. Also involved in the hydrolysis of GTP during the formation of the 70S ribosomal complex. This is Translation initiation factor IF-2 from Campylobacter jejuni subsp. jejuni serotype O:6 (strain 81116 / NCTC 11828).